The primary structure comprises 390 residues: Phosphopentomutase (390 aa).

Positions 11, 283, 288, 324, 325, and 336 each coordinate Mn(2+).

It belongs to the phosphopentomutase family. The cofactor is Mn(2+).

It localises to the cytoplasm. It carries out the reaction 2-deoxy-alpha-D-ribose 1-phosphate = 2-deoxy-D-ribose 5-phosphate. The enzyme catalyses alpha-D-ribose 1-phosphate = D-ribose 5-phosphate. Its pathway is carbohydrate degradation; 2-deoxy-D-ribose 1-phosphate degradation; D-glyceraldehyde 3-phosphate and acetaldehyde from 2-deoxy-alpha-D-ribose 1-phosphate: step 1/2. Its function is as follows. Isomerase that catalyzes the conversion of deoxy-ribose 1-phosphate (dRib-1-P) and ribose 1-phosphate (Rib-1-P) to deoxy-ribose 5-phosphate (dRib-5-P) and ribose 5-phosphate (Rib-5-P), respectively. This Alkaliphilus oremlandii (strain OhILAs) (Clostridium oremlandii (strain OhILAs)) protein is Phosphopentomutase.